A 169-amino-acid chain; its full sequence is X polypeptide (169 aa).

The protein belongs to the IagB/IpgF/P19 family.

The protein is X polypeptide (yubQ) of Escherichia coli (strain K12).